We begin with the raw amino-acid sequence, 308 residues long: tRNA pseudouridine synthase B (308 aa).

Asp-47 serves as the catalytic Nucleophile.

This sequence belongs to the pseudouridine synthase TruB family. Type 1 subfamily.

It carries out the reaction uridine(55) in tRNA = pseudouridine(55) in tRNA. In terms of biological role, responsible for synthesis of pseudouridine from uracil-55 in the psi GC loop of transfer RNAs. The protein is tRNA pseudouridine synthase B of Xanthomonas campestris pv. campestris (strain B100).